We begin with the raw amino-acid sequence, 555 residues long: Suppressor of tumorigenicity 7 protein-like (555 aa).

A run of 4 helical transmembrane segments spans residues 32–52, 76–96, 504–524, and 531–551; these read APWA…YAAL, FYFA…VFEW, LPFF…LALL, and LMVV…APSV.

It belongs to the ST7 family.

Its subcellular location is the membrane. The polypeptide is Suppressor of tumorigenicity 7 protein-like (ST7L) (Gallus gallus (Chicken)).